A 340-amino-acid chain; its full sequence is Coproporphyrin III ferrochelatase (340 aa).

2 residues coordinate Fe-coproporphyrin III: S52 and Y121. Residues H177 and E260 each contribute to the Fe(2+) site.

Belongs to the ferrochelatase family.

The protein resides in the cytoplasm. The enzyme catalyses Fe-coproporphyrin III + 2 H(+) = coproporphyrin III + Fe(2+). Its pathway is porphyrin-containing compound metabolism; protoheme biosynthesis. Functionally, involved in coproporphyrin-dependent heme b biosynthesis. Catalyzes the insertion of ferrous iron into coproporphyrin III to form Fe-coproporphyrin III. The sequence is that of Coproporphyrin III ferrochelatase from Mycobacteroides abscessus (strain ATCC 19977 / DSM 44196 / CCUG 20993 / CIP 104536 / JCM 13569 / NCTC 13031 / TMC 1543 / L948) (Mycobacterium abscessus).